The chain runs to 292 residues: Putative gonadotropin-releasing hormone II receptor (292 aa).

Residues methionine 1–threonine 28 lie on the Extracellular side of the membrane. An intrachain disulfide couples cysteine 26 to cysteine 101. The chain crosses the membrane as a helical span at residues leucine 29–leucine 49. Residues aspartate 50 to lysine 67 lie on the Cytoplasmic side of the membrane. Residues leucine 68–histidine 88 form a helical membrane-spanning segment. The Extracellular segment spans residues threonine 89–threonine 115. A helical membrane pass occupies residues tyrosine 116–tyrosine 136. Over serine 137–arginine 177 the chain is Cytoplasmic. The chain crosses the membrane as a helical span at residues leucine 178–methionine 198. Over tryptophan 199–histidine 216 the chain is Extracellular. Residues isoleucine 217–threonine 237 form a helical membrane-spanning segment. Residues leucine 238–isoleucine 292 lie on the Cytoplasmic side of the membrane.

This sequence belongs to the G-protein coupled receptor 1 family. Post-translationally, phosphorylated on the C-terminal cytoplasmic tail. As to expression, expressed in many tissues.

The protein resides in the cell membrane. Functionally, putative receptor for gonadotropin releasing hormone II (GnRH II) which is most probably non-functional. The chain is Putative gonadotropin-releasing hormone II receptor (GNRHR2) from Homo sapiens (Human).